Consider the following 90-residue polypeptide: Genome polyprotein (90 aa).

This sequence belongs to the potyviridae genome polyprotein family. In terms of processing, genome polyprotein of potyviruses undergoes post-translational proteolytic processing by the main proteinase NIa-pro resulting in the production of at least ten individual proteins. The P1 proteinase and the HC-pro cleave only their respective C-termini autocatalytically. 6K1 is essential for proper proteolytic separation of P3 from CI.

It is found in the virion. Involved in aphid transmission, cell-to-cell and systemis movement, encapsidation of the viral RNA and in the regulation of viral RNA amplification. The sequence is that of Genome polyprotein from Gloriosa stripe mosaic virus (GSMV).